Consider the following 415-residue polypeptide: Alpha-N-acetylgalactosaminidase (415 aa).

A signal peptide spans methionine 1–methionine 17. 3 cysteine pairs are disulfide-bonded: cysteine 38-cysteine 80, cysteine 42-cysteine 49, and cysteine 127-cysteine 158. Substrate is bound by residues aspartate 78–aspartate 79 and lysine 154. The Nucleophile role is filled by aspartate 156. N-linked (GlcNAc...) asparagine glycosylation is present at asparagine 177. Cysteine 187 and cysteine 209 form a disulfide bridge. Serine 188 provides a ligand contact to substrate. N-linked (GlcNAc...) asparagine glycosylation occurs at asparagine 201. Substrate-binding residues include arginine 213 and aspartate 217. The active-site Proton donor is aspartate 217. Position 322 is a phosphoserine (serine 322). Asparagine 330 is a glycosylation site (N-linked (GlcNAc...) asparagine). Serine 332 is subject to Phosphoserine. An N-linked (GlcNAc...) asparagine glycan is attached at asparagine 385.

It belongs to the glycosyl hydrolase 27 family. In terms of assembly, homodimer.

Its subcellular location is the lysosome. It catalyses the reaction Cleavage of non-reducing alpha-(1-&gt;3)-N-acetylgalactosamine residues from human blood group A and AB mucin glycoproteins, Forssman hapten and blood group A lacto series glycolipids.. The enzyme catalyses a neolactoside IV(3)-alpha-GalNAc,IV(2)-alpha-Fuc-nLc4Cer(d18:1(4E)) + H2O = a neolactoside IV(2)-alpha-Fuc-nLc4Cer(d18:1(4E)) + N-acetyl-alpha-D-galactosamine. The catalysed reaction is a neolactoside IV(3)-alpha-GalNAc,IV(2)-alpha-Fuc-nLc4Cer(d18:0) + H2O = a neolactoside IV(2)-alpha-Fuc-nLc4Cer(d18:0) + N-acetyl-alpha-D-galactosamine. It carries out the reaction a globoside IV3GalNAc-Gb4Cer + H2O = N-acetyl-alpha-D-galactosamine + a globoside Gb4Cer. Removes terminal alpha-N-acetylgalactosamine residues from glycolipids and glycopeptides. Required for the breakdown of glycolipids. The chain is Alpha-N-acetylgalactosaminidase (Naga) from Rattus norvegicus (Rat).